A 341-amino-acid chain; its full sequence is DNA-directed RNA polymerase subunit alpha (341 aa).

Residues 1 to 233 (MIQDEVPVSA…DLFLPFLHTE (233 aa)) are alpha N-terminal domain (alpha-NTD). The tract at residues 262–341 (DRMAKEVAFK…NLPRNKFSID (80 aa)) is alpha C-terminal domain (alpha-CTD).

Belongs to the RNA polymerase alpha chain family. As to quaternary structure, in plastids the minimal PEP RNA polymerase catalytic core is composed of four subunits: alpha, beta, beta', and beta''. When a (nuclear-encoded) sigma factor is associated with the core the holoenzyme is formed, which can initiate transcription.

It localises to the plastid. It is found in the chloroplast. It catalyses the reaction RNA(n) + a ribonucleoside 5'-triphosphate = RNA(n+1) + diphosphate. DNA-dependent RNA polymerase catalyzes the transcription of DNA into RNA using the four ribonucleoside triphosphates as substrates. The sequence is that of DNA-directed RNA polymerase subunit alpha from Angiopteris evecta (Mule's foot fern).